The following is a 635-amino-acid chain: Protein NSP-INTERACTING KINASE 2 (635 aa).

Positions 1-32 are cleaved as a signal peptide; that stretch reads MLQGRREAKKSYALFSSTFFFFFICFLSSSSA. Over 33-248 the chain is Extracellular; it reads ELTDKGVNFE…DGGTKNRKIA (216 aa). N-linked (GlcNAc...) asparagine glycans are attached at residues asparagine 92 and asparagine 103. LRR repeat units lie at residues 104-128, 129-153, 155-176, and 177-200; these read LTNL…IGKL, MKLK…SYSK, LQYL…LANM, and TQLT…LAKT. N-linked (GlcNAc...) asparagine glycosylation is found at asparagine 140, asparagine 162, asparagine 175, asparagine 188, asparagine 219, asparagine 231, and asparagine 235. The tract at residues 214 to 242 is disordered; sequence TEKDCNGTQPKPMSITLNSSQNKSSDGGT. The segment covering 219-241 has biased composition (polar residues); that stretch reads NGTQPKPMSITLNSSQNKSSDGG. A helical membrane pass occupies residues 249–269; it reads VVFGVSLTCVCLLIIGFGFLL. Topologically, residues 270–635 are cytoplasmic; it reads WWRRRHNKQV…VQAMELSGPR (366 aa). Threonine 309 is modified (phosphothreonine). A Protein kinase domain is found at 312–591; the sequence is FSSKNLVGKG…EGDGLVEKWE (280 aa). ATP-binding positions include 318 to 326 and lysine 340; that span reads VGKGGFGNV. 2 positions are modified to phosphoserine: serine 393 and serine 396. A Phosphothreonine modification is found at threonine 408. The interaction with geminivirus NSP protein stretch occupies residues 422 to 502; it reads YLHEQCDPKI…DVFGFGILLL (81 aa). The Proton acceptor role is filled by aspartate 435. A phosphothreonine mark is found at threonine 468, threonine 469, and threonine 474. Position 482 is a phosphotyrosine (tyrosine 482). Serine 484 is subject to Phosphoserine. Threonine 485 bears the Phosphothreonine mark. Serine 489 carries the post-translational modification Phosphoserine. At threonine 564 the chain carries Phosphothreonine. Residues 593–613 show a composition bias toward polar residues; that stretch reads SSQRAETNRSYSKPNEFSSSE. The tract at residues 593–621 is disordered; it reads SSQRAETNRSYSKPNEFSSSERYSDLTDD.

It belongs to the protein kinase superfamily. Ser/Thr protein kinase family. In terms of assembly, oligomer. Interacts with geminivirus nuclear shuttle protein (NSP). Post-translationally, autophosphorylated. In terms of tissue distribution, expressed in flowers and roots.

Its subcellular location is the cell membrane. It carries out the reaction L-seryl-[protein] + ATP = O-phospho-L-seryl-[protein] + ADP + H(+). The enzyme catalyses L-threonyl-[protein] + ATP = O-phospho-L-threonyl-[protein] + ADP + H(+). Its activity is regulated as follows. Inhibited by the viral nuclear shuttle protein (NSP) that binds to the region required for oligomerization. In terms of biological role, involved in defense response to geminivirus infection. Phosphorylates RPL10A in vitro. The protein is Protein NSP-INTERACTING KINASE 2 (NIK2) of Arabidopsis thaliana (Mouse-ear cress).